Reading from the N-terminus, the 97-residue chain is MLCVIYRSSKRDQTYLYVEKKDDFSRVPEELMQGFGKPQLAMILPLDGRKKLVNADIEKVKKALTEQGYYLQLPPPPEDLLKQHLSLTGHIRTESEQ.

One can recognise a YcgL domain in the interval 1 to 85 (MLCVIYRSSK…PPEDLLKQHL (85 aa)).

The protein is Protein YcgL of Escherichia fergusonii (strain ATCC 35469 / DSM 13698 / CCUG 18766 / IAM 14443 / JCM 21226 / LMG 7866 / NBRC 102419 / NCTC 12128 / CDC 0568-73).